The chain runs to 272 residues: Orotidine 5'-phosphate decarboxylase (272 aa).

The active-site Proton donor is Lys95.

It belongs to the OMP decarboxylase family. Type 2 subfamily.

The catalysed reaction is orotidine 5'-phosphate + H(+) = UMP + CO2. It participates in pyrimidine metabolism; UMP biosynthesis via de novo pathway; UMP from orotate: step 2/2. The sequence is that of Orotidine 5'-phosphate decarboxylase from Cupriavidus metallidurans (strain ATCC 43123 / DSM 2839 / NBRC 102507 / CH34) (Ralstonia metallidurans).